We begin with the raw amino-acid sequence, 375 residues long: ATP-sensitive inward rectifier potassium channel 15 (375 aa).

Residues 1–60 are Cytoplasmic-facing; the sequence is MDAIHLGMSSAPLVKHTNGVGLKAHRPRVMSKSGHSNVRIDKVDGIYLLYLQDLWTTVID. Residues 61 to 87 traverse the membrane as a helical segment; the sequence is MKWRYKLTLFAATFVMTWFLFGVVYYA. Residues 88 to 113 are Extracellular-facing; that stretch reads IAFIHGDLQLGESNSNHTPCIMKVDS. Residues 114 to 130 constitute an intramembrane region (helical; Pore-forming); sequence LTGAFLFSLESQTTIGY. The Selectivity filter motif lies at 127-132; it reads TIGYGV. Topologically, residues 131 to 139 are extracellular; the sequence is GVRSITEEC. The chain crosses the membrane as a helical span at residues 140–165; that stretch reads PHAIFLLVAQLVITTLIEIFITGTFL. Over 166 to 375 the chain is Cytoplasmic; that stretch reads AKIARPKKRA…RSLLLQQSNV (210 aa).

The protein belongs to the inward rectifier-type potassium channel (TC 1.A.2.1) family. KCNJ15 subfamily. Can form heteromultimeric channels with Kir5.1/KCNJ16. Interacts with PATJ. Expressed in the proximal segment of the nephron.

It is found in the membrane. It localises to the cell membrane. The enzyme catalyses K(+)(in) = K(+)(out). Its activity is regulated as follows. Channel activity is regulated by variations of cytosolic pH; reversibly inhibited by acidic pH values. Inhibited by Ba(2+) and Cs(+) in a voltage-dependent manner. In terms of biological role, inward rectifier potassium channels are characterized by a greater tendency to allow potassium to flow into the cell rather than out of it. Their voltage dependence is regulated by the concentration of extracellular potassium; as external potassium is raised, the voltage range of the channel opening shifts to more positive voltages. The inward rectification is mainly due to the blockage of outward current by internal magnesium. This Mus musculus (Mouse) protein is ATP-sensitive inward rectifier potassium channel 15 (Kcnj15).